A 309-amino-acid chain; its full sequence is Methionyl-tRNA formyltransferase (309 aa).

109–112 serves as a coordination point for (6S)-5,6,7,8-tetrahydrofolate; that stretch reads SLLP.

This sequence belongs to the Fmt family.

The enzyme catalyses L-methionyl-tRNA(fMet) + (6R)-10-formyltetrahydrofolate = N-formyl-L-methionyl-tRNA(fMet) + (6S)-5,6,7,8-tetrahydrofolate + H(+). Its function is as follows. Attaches a formyl group to the free amino group of methionyl-tRNA(fMet). The formyl group appears to play a dual role in the initiator identity of N-formylmethionyl-tRNA by promoting its recognition by IF2 and preventing the misappropriation of this tRNA by the elongation apparatus. The sequence is that of Methionyl-tRNA formyltransferase from Clostridium perfringens (strain SM101 / Type A).